The following is a 366-amino-acid chain: Chorismate synthase (366 aa).

Arg46 is a binding site for NADP(+). FMN contacts are provided by residues 122 to 124, 243 to 244, Gly284, 299 to 303, and Arg325; these read RSS, NG, and KPTPS.

Belongs to the chorismate synthase family. As to quaternary structure, homotetramer. Requires FMNH2 as cofactor.

The enzyme catalyses 5-O-(1-carboxyvinyl)-3-phosphoshikimate = chorismate + phosphate. It participates in metabolic intermediate biosynthesis; chorismate biosynthesis; chorismate from D-erythrose 4-phosphate and phosphoenolpyruvate: step 7/7. In terms of biological role, catalyzes the anti-1,4-elimination of the C-3 phosphate and the C-6 proR hydrogen from 5-enolpyruvylshikimate-3-phosphate (EPSP) to yield chorismate, which is the branch point compound that serves as the starting substrate for the three terminal pathways of aromatic amino acid biosynthesis. This reaction introduces a second double bond into the aromatic ring system. The protein is Chorismate synthase of Campylobacter hominis (strain ATCC BAA-381 / DSM 21671 / CCUG 45161 / LMG 19568 / NCTC 13146 / CH001A).